The following is a 662-amino-acid chain: MSKQTLSFQAEVAQLLHLVTHSLYSNQEIFLRELISNASDACDKLRFAGLNQPALFEDAPQLEVRVSFDQTARTLTITDNGIGMSQQEAIEHLGTIAKSGTKDFMGQLSGDQKQDAQLIGQFGVGFYSGFIVADKITVESRRAGLPASEGVRWASGGTGDFEVETIDRPARGTSVILHLRDSAEEYLNNWKLKSIISRYSDHISLPILMEKQEWKDGELINPGDEKGGRQPGAMVKTGDWETVNQASALWARPKKDVSDAQYAEFYKTISHDPLAPLTWAHNRVEGSTEYTQLLYIPAKAPFDLWNRDKKAGVKLYVKRVFIMDDAEALLPTYLRFVKGVIDSADLPLNVSRELLQESRDVRAIREGSTKRVLSMLEDLARHDRHDSPAPQPAEGADRVSDVVDADDKAKEGKYSQFYAEFGAVLKEGLGEDFANRERLARLLRFASTSSDQASVGLADYKARMKEGQEAIYYITADTLAAAKHSPQLEVFKKKGIEVLLMTDRVDEWALNYLHEFDGTPLQSVAKGAVDLGKLQDEAEKKAAEEAAEAFKPLLARLKETLKDKAEDVRVTTRLVDSPACLVVHGDGMSTQLARLLKQAGQQAPETKPVLEVNASHALVRKLDGSQHFDDLAHILFDQALLAEGGLPADPAAYVKRVNALLV.

An a; substrate-binding region spans residues 1 to 352 (MSKQTLSFQA…SADLPLNVSR (352 aa)). A b region spans residues 353-594 (ELLQESRDVR…GDGMSTQLAR (242 aa)). Residues 382–402 (HDRHDSPAPQPAEGADRVSDV) are disordered. The c stretch occupies residues 595–662 (LLKQAGQQAP…YVKRVNALLV (68 aa)).

Belongs to the heat shock protein 90 family. As to quaternary structure, homodimer.

It is found in the cytoplasm. Molecular chaperone. Has ATPase activity. This Verminephrobacter eiseniae (strain EF01-2) protein is Chaperone protein HtpG.